We begin with the raw amino-acid sequence, 594 residues long: Actin-histidine N-methyltransferase (594 aa).

The segment at 1 to 23 is disordered; sequence MGKKSRVKTQKSGTGATASVSPK. The segment covering 10-23 has biased composition (polar residues); that stretch reads QKSGTGATASVSPK. S-adenosyl-L-methionine is bound by residues arginine 75, 104 to 106, arginine 254, 275 to 279, and 325 to 327; these read EGF, DMCNH, and SGF. One can recognise an SET domain in the interval 94-314; sequence EGFEMVSFKE…AGEQIYIFYG (221 aa). A disordered region spans residues 553-594; that stretch reads INGENSIPNGTRLEKEDLNQEQSKRVTEDAKEPSDSTEEVKE. Basic and acidic residues predominate over residues 564–594; it reads RLEKEDLNQEQSKRVTEDAKEPSDSTEEVKE.

This sequence belongs to the class V-like SAM-binding methyltransferase superfamily. SETD3 actin-histidine methyltransferase family. Interacts with MYOD1. Post-translationally, phosphorylated by GSK3B, which is required for recognition by the SCF(FBXW7) complex and subsequent degradation. In terms of processing, ubiquitinated by the SCF(FBXW7) complex following phosphorylation by GSK3B, leading to its degradation by the proteasome.

Its subcellular location is the cytoplasm. It is found in the nucleus. It carries out the reaction L-histidyl-[protein] + S-adenosyl-L-methionine = N(tele)-methyl-L-histidyl-[protein] + S-adenosyl-L-homocysteine + H(+). Protein-histidine N-methyltransferase that specifically mediates 3-methylhistidine (tele-methylhistidine) methylation of actin at 'His-73'. Histidine methylation of actin is required for smooth muscle contraction of the laboring uterus during delivery. Does not have protein-lysine N-methyltransferase activity and probably only catalyzes histidine methylation of actin. This chain is Actin-histidine N-methyltransferase, found in Rhinolophus ferrumequinum (Greater horseshoe bat).